A 179-amino-acid chain; its full sequence is Photosystem I assembly protein Ycf3 (179 aa).

TPR repeat units lie at residues 29–62, 66–99, and 126–159; these read AFSY…EEDP, SYTL…NSNL, and NLEI…APDN.

The protein belongs to the Ycf3 family.

The protein resides in the plastid. It is found in the chloroplast thylakoid membrane. Essential for the assembly of the photosystem I (PSI) complex. May act as a chaperone-like factor to guide the assembly of the PSI subunits. The chain is Photosystem I assembly protein Ycf3 from Trieres chinensis (Marine centric diatom).